The following is a 390-amino-acid chain: MSYEKKAVHFGGGNIGRGFVAEFLHNSGYEVVFVDVMDSIIESLQKTKTYTVTEIGDDGERKFTIDHYRAINSKHEMDKVVQEIASADVVTCAVGPNILKFVAEPVAKAIEARTLDYPIAVIACENAINATTTWRGFIESKLSEETKKNIDSKARFANSAIDRIVPQQPPNGGLDVVIEKFHEWCVEQKPFENGGKKPDVKGIHYVDDLEPYIERKLFTVNTSHATAAYYGHQNKVQYIHEVLHDKKLHDTVRDAVKETAHLIVTKHGVETAEQDAYVEEIIKRISNPVLKDNVERVGRAPLRKLSRKERFIGPAAQLAERGEKVDALLGAVEQAYRFQNVEGDEESVELAKILKENSAEEVVTKVNGIEKGQPLFDRLVAIVKKVQGGS.

7–18 contacts NAD(+); the sequence is AVHFGGGNIGRG. The active site involves Lys-216.

Belongs to the mannitol dehydrogenase family. As to quaternary structure, monomer.

It catalyses the reaction D-mannitol 1-phosphate + NAD(+) = beta-D-fructose 6-phosphate + NADH + H(+). In terms of biological role, catalyzes the NAD(H)-dependent interconversion of D-fructose 6-phosphate and D-mannitol 1-phosphate in the mannitol metabolic pathway. Has a strong preference for NADH over NADPH. The polypeptide is Mannitol-1-phosphate 5-dehydrogenase (Alternaria alternata (Alternaria rot fungus)).